The chain runs to 263 residues: Large ribosomal subunit protein uL10m (263 aa).

Residues 1–29 constitute a mitochondrion transit peptide; the sequence is MPFSVEVEVFFLLVEDKLGWLPTLQPVRH. The interval 241 to 263 is disordered; that stretch reads QHEGDCATSTEGKPHPPDPAPDS.

The protein belongs to the universal ribosomal protein uL10 family. In terms of assembly, component of the mitochondrial ribosome large subunit (39S) which comprises a 16S rRNA and about 50 distinct proteins.

Its subcellular location is the mitochondrion. This is Large ribosomal subunit protein uL10m (Mrpl10) from Rattus norvegicus (Rat).